The chain runs to 626 residues: DNA primase (626 aa).

The CHC2-type zinc finger occupies 39-63 (CPFHGEKTPSFSVSPEKQIFHCFGC). Positions 264–346 (EEITLMEGFM…DVFVLQLPAG (83 aa)) constitute a Toprim domain. Glu270, Asp314, and Asp316 together coordinate Mg(2+).

The protein belongs to the DnaG primase family. Monomer. Interacts with DnaB. Requires Zn(2+) as cofactor. It depends on Mg(2+) as a cofactor.

It carries out the reaction ssDNA + n NTP = ssDNA/pppN(pN)n-1 hybrid + (n-1) diphosphate.. Functionally, RNA polymerase that catalyzes the synthesis of short RNA molecules used as primers for DNA polymerase during DNA replication. The chain is DNA primase from Listeria innocua serovar 6a (strain ATCC BAA-680 / CLIP 11262).